The sequence spans 213 residues: ATP-dependent Clp protease proteolytic subunit 1 (213 aa).

Serine 114 (nucleophile) is an active-site residue. Histidine 139 is a catalytic residue.

The protein belongs to the peptidase S14 family. In terms of assembly, fourteen ClpP subunits assemble into 2 heptameric rings which stack back to back to give a disk-like structure with a central cavity, resembling the structure of eukaryotic proteasomes.

Its subcellular location is the cytoplasm. It catalyses the reaction Hydrolysis of proteins to small peptides in the presence of ATP and magnesium. alpha-casein is the usual test substrate. In the absence of ATP, only oligopeptides shorter than five residues are hydrolyzed (such as succinyl-Leu-Tyr-|-NHMec, and Leu-Tyr-Leu-|-Tyr-Trp, in which cleavage of the -Tyr-|-Leu- and -Tyr-|-Trp bonds also occurs).. In terms of biological role, cleaves peptides in various proteins in a process that requires ATP hydrolysis. Has a chymotrypsin-like activity. Plays a major role in the degradation of misfolded proteins. The polypeptide is ATP-dependent Clp protease proteolytic subunit 1 (Pseudomonas aeruginosa (strain ATCC 15692 / DSM 22644 / CIP 104116 / JCM 14847 / LMG 12228 / 1C / PRS 101 / PAO1)).